We begin with the raw amino-acid sequence, 389 residues long: Chalcone synthase 4-1 (389 aa).

C164 is an active-site residue.

This sequence belongs to the thiolase-like superfamily. Chalcone/stilbene synthases family.

It carries out the reaction (E)-4-coumaroyl-CoA + 3 malonyl-CoA + 3 H(+) = 2',4,4',6'-tetrahydroxychalcone + 3 CO2 + 4 CoA. It functions in the pathway secondary metabolite biosynthesis; flavonoid biosynthesis. Its function is as follows. The primary product of this enzyme is 4,2',4',6'-tetrahydroxychalcone (also termed naringenin-chalcone or chalcone) which can under specific conditions spontaneously isomerize into naringenin. This chain is Chalcone synthase 4-1 (CHS4-1), found in Medicago sativa (Alfalfa).